We begin with the raw amino-acid sequence, 140 residues long: Translation initiation factor 2 subunit beta (140 aa).

This sequence belongs to the eIF-2-beta/eIF-5 family. Heterotrimer composed of an alpha, a beta and a gamma chain.

Functionally, eIF-2 functions in the early steps of protein synthesis by forming a ternary complex with GTP and initiator tRNA. The sequence is that of Translation initiation factor 2 subunit beta (eif2b) from Pyrococcus abyssi (strain GE5 / Orsay).